The following is a 1940-amino-acid chain: Myosin-1B (1940 aa).

Positions 33-82 constitute a Myosin N-terminal SH3-like domain; the sequence is DAKSSVFVVHAKESYVKSTIQSKESGKVTVKTEGGETLTVKEDQIFSMNP. One can recognise a Myosin motor domain in the interval 86-783; sequence DKIEDMAMMT…LLGLLEEMRD (698 aa). At K130 the chain carries N6,N6,N6-trimethyllysine. 179–186 serves as a coordination point for ATP; sequence GESGAGKT. 2 actin-binding regions span residues 660-682 and 762-776; these read LNKL…IPNE and KFGH…GLLG. Positions 786 to 815 constitute an IQ domain; it reads LAQLITRTQARCRGFLMRVEFKKMMERRES. The stretch at 844 to 1940 forms a coiled coil; sequence LLKSAESEKE…EIGKKAESEE (1097 aa). Residues 1912–1940 form a disordered region; sequence EERADIAESQVNKLRAKSREIGKKAESEE. The span at 1928–1940 shows a compositional bias: basic and acidic residues; the sequence is KSREIGKKAESEE.

The protein belongs to the TRAFAC class myosin-kinesin ATPase superfamily. Myosin family. As to quaternary structure, muscle myosin is a hexameric protein that consists of 2 heavy chain subunits (MHC), 2 alkali light chain subunits (MLC) and 2 regulatory light chain subunits (MLC-2).

The protein resides in the cytoplasm. It localises to the myofibril. In terms of biological role, muscle contraction. The sequence is that of Myosin-1B (MYH1B) from Gallus gallus (Chicken).